Here is a 326-residue protein sequence, read N- to C-terminus: DNA-directed RNA polymerase subunit alpha (326 aa).

The interval 1–230 is alpha N-terminal domain (alpha-NTD); that stretch reads MLKIEKQAKA…LHLDPFLEIG (230 aa). The tract at residues 249-326 is alpha C-terminal domain (alpha-CTD); sequence DIQVIDDKSH…YDLEKNGSPE (78 aa).

The protein belongs to the RNA polymerase alpha chain family. Homodimer. The RNAP catalytic core consists of 2 alpha, 1 beta, 1 beta' and 1 omega subunit. When a sigma factor is associated with the core the holoenzyme is formed, which can initiate transcription.

It carries out the reaction RNA(n) + a ribonucleoside 5'-triphosphate = RNA(n+1) + diphosphate. In terms of biological role, DNA-dependent RNA polymerase catalyzes the transcription of DNA into RNA using the four ribonucleoside triphosphates as substrates. The sequence is that of DNA-directed RNA polymerase subunit alpha from Fusobacterium nucleatum subsp. nucleatum (strain ATCC 25586 / DSM 15643 / BCRC 10681 / CIP 101130 / JCM 8532 / KCTC 2640 / LMG 13131 / VPI 4355).